Consider the following 75-residue polypeptide: ATP synthase subunit c (75 aa).

Transmembrane regions (helical) follow at residues 13-33 and 54-74; these read LNVVGYGLAAIGPGIGLGILI and MFLGLAFVEVLALLGFVLAFI.

This sequence belongs to the ATPase C chain family. As to quaternary structure, F-type ATPases have 2 components, F(1) - the catalytic core - and F(0) - the membrane proton channel. F(1) has five subunits: alpha(3), beta(3), gamma(1), delta(1), epsilon(1). F(0) has three main subunits: a(1), b(2) and c(10-14). The alpha and beta chains form an alternating ring which encloses part of the gamma chain. F(1) is attached to F(0) by a central stalk formed by the gamma and epsilon chains, while a peripheral stalk is formed by the delta and b chains.

Its subcellular location is the cell membrane. Its function is as follows. F(1)F(0) ATP synthase produces ATP from ADP in the presence of a proton or sodium gradient. F-type ATPases consist of two structural domains, F(1) containing the extramembraneous catalytic core and F(0) containing the membrane proton channel, linked together by a central stalk and a peripheral stalk. During catalysis, ATP synthesis in the catalytic domain of F(1) is coupled via a rotary mechanism of the central stalk subunits to proton translocation. Key component of the F(0) channel; it plays a direct role in translocation across the membrane. A homomeric c-ring of between 10-14 subunits forms the central stalk rotor element with the F(1) delta and epsilon subunits. The protein is ATP synthase subunit c of Bifidobacterium adolescentis (strain ATCC 15703 / DSM 20083 / NCTC 11814 / E194a).